Here is a 741-residue protein sequence, read N- to C-terminus: Protein O-mannosyl-transferase TMTC4 (741 aa).

The Cytoplasmic portion of the chain corresponds to 1–14 (MAVLDTDLDHILPS). The helical transmembrane segment at 15–35 (SVLPPFWAKLVVGSVAIVCFA) threads the bilayer. Residues 36–111 (RSYDGDFVFD…FHPVGFHVVN (76 aa)) lie on the Extracellular side of the membrane. An N-linked (GlcNAc...) asparagine glycan is attached at Asn78. The chain crosses the membrane as a helical span at residues 112-132 (ILLHSGISVLMVDVFSVLFGG). Topologically, residues 133–141 (LQYTSKGRR) are cytoplasmic. A helical membrane pass occupies residues 142–162 (LHLAPRASLLAALLFAVHPVH). At 163-165 (TEC) the chain is on the extracellular side. The chain crosses the membrane as a helical span at residues 166 to 186 (VAGVVGRADLLCALFFLLSFL). Residues 187–198 (GYCKAFRESNKE) lie on the Cytoplasmic side of the membrane. Residues 199–219 (GAHSSTFWVLLSIFLGAVAML) traverse the membrane as a helical segment. The Extracellular portion of the chain corresponds to 220–224 (CKEQG). The chain crosses the membrane as a helical span at residues 225–245 (ITVLGLNAVFDILVIGKFNVL). The Cytoplasmic portion of the chain corresponds to 246 to 268 (EIVQKVLHKDKSLENLGMLRNGG). A helical membrane pass occupies residues 269–288 (LLFRMTLLTSGGAGMLYVRW). At 289 to 354 (RIMGTGPPAF…PLIKSISDWR (66 aa)) the chain is on the extracellular side. Residues 355-375 (VIALAALWFCLIGLICQALCS) form a helical membrane-spanning segment. Over 376 to 382 (EDGHKRR) the chain is Cytoplasmic. The helical transmembrane segment at 383–403 (ILTLGLGFLVIPFLPASNLFF) threads the bilayer. Residues 404 to 412 (RVGFVVAER) are Extracellular-facing. Residues 413–433 (VLYLPSVGYCVLLTFGFGALS) traverse the membrane as a helical segment. At 434-440 (KHTKKKK) the chain is on the cytoplasmic side. A helical transmembrane segment spans residues 441 to 461 (LIAAVVLGILFINTLRCVLRS). Topologically, residues 462-741 (GEWRSEEQLF…KLELMQKKAV (280 aa)) are extracellular. 7 TPR repeats span residues 482–515 (AKVH…NPKY), 516–549 (VHAM…QPDF), 550–583 (AAAW…RRKY), 584–617 (PDCY…KPEH), 618–651 (SLAW…IPND), 652–685 (HSLM…NPNA), and 686–719 (ASYH…DPTA). N-linked (GlcNAc...) asparagine glycosylation is present at Asn497. The N-linked (GlcNAc...) asparagine glycan is linked to Asn609.

It belongs to the TMTC family.

It localises to the membrane. It is found in the endoplasmic reticulum. The catalysed reaction is a di-trans,poly-cis-dolichyl beta-D-mannosyl phosphate + L-seryl-[protein] = 3-O-(alpha-D-mannosyl)-L-seryl-[protein] + a di-trans,poly-cis-dolichyl phosphate + H(+). It catalyses the reaction a di-trans,poly-cis-dolichyl beta-D-mannosyl phosphate + L-threonyl-[protein] = 3-O-(alpha-D-mannosyl)-L-threonyl-[protein] + a di-trans,poly-cis-dolichyl phosphate + H(+). Its pathway is protein modification; protein glycosylation. Transfers mannosyl residues to the hydroxyl group of serine or threonine residues. The 4 members of the TMTC family are O-mannosyl-transferases dedicated primarily to the cadherin superfamily, each member seems to have a distinct role in decorating the cadherin domains with O-linked mannose glycans at specific regions. Also acts as O-mannosyl-transferase on other proteins such as PDIA3. The protein is Protein O-mannosyl-transferase TMTC4 of Homo sapiens (Human).